A 160-amino-acid polypeptide reads, in one-letter code: Phosphopantetheine adenylyltransferase (160 aa).

Residue Ser9 participates in substrate binding. ATP is bound by residues 9–10 (SL) and His17. Positions 41, 74, and 88 each coordinate substrate. Residues 89 to 91 (GIR), Glu99, and 123 to 129 (YLHLSST) contribute to the ATP site.

The protein belongs to the bacterial CoaD family. In terms of assembly, homohexamer. Requires Mg(2+) as cofactor.

Its subcellular location is the cytoplasm. The enzyme catalyses (R)-4'-phosphopantetheine + ATP + H(+) = 3'-dephospho-CoA + diphosphate. The protein operates within cofactor biosynthesis; coenzyme A biosynthesis; CoA from (R)-pantothenate: step 4/5. In terms of biological role, reversibly transfers an adenylyl group from ATP to 4'-phosphopantetheine, yielding dephospho-CoA (dPCoA) and pyrophosphate. This is Phosphopantetheine adenylyltransferase from Renibacterium salmoninarum (strain ATCC 33209 / DSM 20767 / JCM 11484 / NBRC 15589 / NCIMB 2235).